Reading from the N-terminus, the 245-residue chain is 23S rRNA (guanosine-2'-O-)-methyltransferase RlmB (245 aa).

S-adenosyl-L-methionine contacts are provided by G197, I217, and L226.

Belongs to the class IV-like SAM-binding methyltransferase superfamily. RNA methyltransferase TrmH family. RlmB subfamily.

The protein resides in the cytoplasm. The catalysed reaction is guanosine(2251) in 23S rRNA + S-adenosyl-L-methionine = 2'-O-methylguanosine(2251) in 23S rRNA + S-adenosyl-L-homocysteine + H(+). Specifically methylates the ribose of guanosine 2251 in 23S rRNA. The sequence is that of 23S rRNA (guanosine-2'-O-)-methyltransferase RlmB from Pasteurella multocida (strain Pm70).